Here is a 278-residue protein sequence, read N- to C-terminus: Ankyrin repeat and SOCS box protein 13 (278 aa).

ANK repeat units follow at residues 18 to 47, 51 to 80, 84 to 113, 116 to 145, 149 to 178, and 181 to 210; these read VERT…CVNQ, DSIT…QVDA, DGST…KVNP, YTAS…NLEA, HFGT…NVNA, and LHET…NIYA. Positions 229-278 constitute an SOCS box domain; sequence AKCFEYYEKTPLSLSQLCRVSLRKATGVRGLEKVAKLNIPPRLIDYLSYN.

Belongs to the ankyrin SOCS box (ASB) family.

The protein operates within protein modification; protein ubiquitination. Its function is as follows. May be a substrate-recognition component of a SCF-like ECS (Elongin-Cullin-SOCS-box protein) E3 ubiquitin-protein ligase complex which mediates the ubiquitination and subsequent proteasomal degradation of target proteins. The protein is Ankyrin repeat and SOCS box protein 13 (Asb13) of Mus musculus (Mouse).